The sequence spans 223 residues: Ribonuclease DdI (223 aa).

An N-terminal signal peptide occupies residues 1 to 25; sequence MRLIAALLSVLLIASTAQSTVTIYE. A disulfide bridge links Cys-46 with Cys-51. Catalysis depends on residues His-63, Glu-113, and His-117. Cys-78 and Cys-120 are joined by a disulfide. Residue Asn-144 is glycosylated (N-linked (GlcNAc...) asparagine). 2 disulfide bridges follow: Cys-183/Cys-213 and Cys-194/Cys-205.

This sequence belongs to the RNase T2 family.

Its subcellular location is the lysosome. It carries out the reaction a ribonucleotidyl-ribonucleotide-RNA + H2O = a 3'-end 3'-phospho-ribonucleotide-RNA + a 5'-end dephospho-ribonucleoside-RNA + H(+). Its activity is regulated as follows. Inhibited by Cu(2+) and Zn(2+). In terms of biological role, releases mononucleotides from RNA in the order of 3'-GMP &gt; 3'-UMP &gt; 3'-AMP &gt; 3'-CMP. This Dictyostelium discoideum (Social amoeba) protein is Ribonuclease DdI (ddiA).